The primary structure comprises 164 residues: MKTNRSLVVIVSLITATLLLTACAQPEQSSLAGDWLLTPKDKTRGLTGSIAVNIAPFRCKTNCRGDNLPDNTRRWQLSGGNEKELTYLHNMSAQEKVGLNPGWQCYTSFFMRVCQGKPGTRPIVNEDYVSESGFFGSMMHVGIIELRRCQSENCQQELKAINTH.

Positions 1–22 (MKTNRSLVVIVSLITATLLLTA) are cleaved as a signal peptide. Residue C23 is the site of N-palmitoyl cysteine attachment. Residue C23 is the site of S-diacylglycerol cysteine attachment.

It localises to the cell membrane. This is an uncharacterized protein from Escherichia coli (strain K12).